The sequence spans 483 residues: 1-aminocyclopropane-1-carboxylate synthase 2 (483 aa).

An N6-(pyridoxal phosphate)lysine modification is found at Lys275.

This sequence belongs to the class-I pyridoxal-phosphate-dependent aminotransferase family. Pyridoxal 5'-phosphate serves as cofactor.

The catalysed reaction is S-adenosyl-L-methionine = 1-aminocyclopropane-1-carboxylate + S-methyl-5'-thioadenosine + H(+). It functions in the pathway alkene biosynthesis; ethylene biosynthesis via S-adenosyl-L-methionine; ethylene from S-adenosyl-L-methionine: step 1/2. Its function is as follows. Catalyzes the formation of 1-aminocyclopropane-1-carboxylate, a direct precursor of ethylene in higher plants. Involved in defense response by producing ethylene after pathogen infection. Involved in several phosphate deficiency-induced adaptive responses, such as lateral root elongation. The sequence is that of 1-aminocyclopropane-1-carboxylate synthase 2 from Oryza sativa subsp. japonica (Rice).